We begin with the raw amino-acid sequence, 154 residues long: SsrA-binding protein (154 aa).

This sequence belongs to the SmpB family.

The protein resides in the cytoplasm. Its function is as follows. Required for rescue of stalled ribosomes mediated by trans-translation. Binds to transfer-messenger RNA (tmRNA), required for stable association of tmRNA with ribosomes. tmRNA and SmpB together mimic tRNA shape, replacing the anticodon stem-loop with SmpB. tmRNA is encoded by the ssrA gene; the 2 termini fold to resemble tRNA(Ala) and it encodes a 'tag peptide', a short internal open reading frame. During trans-translation Ala-aminoacylated tmRNA acts like a tRNA, entering the A-site of stalled ribosomes, displacing the stalled mRNA. The ribosome then switches to translate the ORF on the tmRNA; the nascent peptide is terminated with the 'tag peptide' encoded by the tmRNA and targeted for degradation. The ribosome is freed to recommence translation, which seems to be the essential function of trans-translation. This chain is SsrA-binding protein, found in Gluconacetobacter diazotrophicus (strain ATCC 49037 / DSM 5601 / CCUG 37298 / CIP 103539 / LMG 7603 / PAl5).